The primary structure comprises 185 residues: Ribosome-recycling factor (185 aa).

It belongs to the RRF family.

It is found in the cytoplasm. Its function is as follows. Responsible for the release of ribosomes from messenger RNA at the termination of protein biosynthesis. May increase the efficiency of translation by recycling ribosomes from one round of translation to another. This is Ribosome-recycling factor from Alteromonas mediterranea (strain DSM 17117 / CIP 110805 / LMG 28347 / Deep ecotype).